The sequence spans 638 residues: MNDTTHATDAAHSPHSTQQHSMRALAIAAIGVVFGDIGTSPLYSLKEAFSPAHGIPLTEGSILGVISLLFWAILLVVGVKYLLFVMRADNNGEGGVLALMALSLRPLDSKTRVAGALMALGIFGACMFYGDAVITPAISVMSAVEGLEIATPHLSHLVLPITIVILIALFWIQRHGTALVGKLFGPIMVLWFVVIAALGVYHIVRVPGIIAAINPYYAASFMADHLLQAYVVLGSVVLVLTGAEALYADMGHFGAKPIRYAAYGLVMPSLVLNYFGQGALLIQNPKAIENPFFLLAPEWGLLPLVVLSTVATVIASQAVISGAYSLTSQAIQLGYVPRMKVLHTSELAIGQIYVPVVNWLLLAVILCIVVGFKSSDNLAAAYGIAVTATMVITTVLACVVMVKVWNWNRLLVGAIIAVFLAIDLGFFGANLLKVAQGGWLPLGIGALLFFLLMTWYKGRHIVKERTAADGIPLEPFLQGLLAHPPHRVSGTAIYLTGNDKLVPVSLLHNLKHNKVLHERTIFLTFVTRDIPYVRDDKRQSARDAGGGLYIVKAEYGFNETPDVKAVLEEFGRTHDMTFELMDTSFFLARETVVPTHLPGMSIWRERVFAWMHQNAAKPTDFFAIPANRVVELGTKIEI.

Transmembrane regions (helical) follow at residues Leu-25 to Leu-45, Val-65 to Val-85, Ala-114 to Ile-134, Pro-152 to Ile-172, Phe-184 to Val-204, Leu-226 to Leu-246, Ala-262 to Ile-282, Pro-291 to Ala-311, Ile-352 to Phe-372, Tyr-382 to Val-402, Leu-410 to Asn-430, and Val-434 to Thr-454.

This sequence belongs to the HAK/KUP transporter (TC 2.A.72) family.

Its subcellular location is the cell inner membrane. The enzyme catalyses K(+)(in) + H(+)(in) = K(+)(out) + H(+)(out). Transport of potassium into the cell. Likely operates as a K(+):H(+) symporter. This chain is Probable potassium transport system protein Kup, found in Burkholderia cenocepacia (strain HI2424).